The following is a 188-amino-acid chain: dCTP deaminase (188 aa).

Residues 111–116 (KSTYAR), 135–137 (TLE), Gln-156, Tyr-170, and Gln-180 contribute to the dCTP site. Residue Glu-137 is the Proton donor/acceptor of the active site.

This sequence belongs to the dCTP deaminase family. In terms of assembly, homotrimer.

It carries out the reaction dCTP + H2O + H(+) = dUTP + NH4(+). It participates in pyrimidine metabolism; dUMP biosynthesis; dUMP from dCTP (dUTP route): step 1/2. In terms of biological role, catalyzes the deamination of dCTP to dUTP. The polypeptide is dCTP deaminase (Pseudomonas aeruginosa (strain UCBPP-PA14)).